We begin with the raw amino-acid sequence, 1106 residues long: Exportin-T (1106 aa).

The tract at residues 336–357 is disordered; sequence TPLESRTRTGPSAQNGQSDTSD. Residues 343 to 357 show a composition bias toward polar residues; the sequence is RTGPSAQNGQSDTSD.

It belongs to the exportin family.

It is found in the nucleus. The protein resides in the cytoplasm. TRNA nucleus export receptor which facilitates tRNA translocation across the nuclear pore complex. Involved in pre-tRNA splicing, probably by affecting the interaction of pre-tRNA with splicing endonuclease. The protein is Exportin-T (LOS1) of Mycosarcoma maydis (Corn smut fungus).